Here is a 392-residue protein sequence, read N- to C-terminus: S-adenosylmethionine synthase (392 aa).

Residue histidine 15 coordinates ATP. Residue aspartate 17 coordinates Mg(2+). A K(+)-binding site is contributed by glutamate 43. Residues glutamate 56 and glutamine 99 each coordinate L-methionine. The flexible loop stretch occupies residues 99–109 (QSKDIAQGVDE). ATP contacts are provided by residues 173-175 (DGK), 239-240 (KF), aspartate 248, 254-255 (RK), alanine 271, and lysine 275. An L-methionine-binding site is contributed by aspartate 248. Lysine 279 is an L-methionine binding site.

This sequence belongs to the AdoMet synthase family. In terms of assembly, homotetramer; dimer of dimers. Mg(2+) is required as a cofactor. K(+) serves as cofactor.

It localises to the cytoplasm. It carries out the reaction L-methionine + ATP + H2O = S-adenosyl-L-methionine + phosphate + diphosphate. Its pathway is amino-acid biosynthesis; S-adenosyl-L-methionine biosynthesis; S-adenosyl-L-methionine from L-methionine: step 1/1. Its function is as follows. Catalyzes the formation of S-adenosylmethionine (AdoMet) from methionine and ATP. The overall synthetic reaction is composed of two sequential steps, AdoMet formation and the subsequent tripolyphosphate hydrolysis which occurs prior to release of AdoMet from the enzyme. In Finegoldia magna (strain ATCC 29328 / DSM 20472 / WAL 2508) (Peptostreptococcus magnus), this protein is S-adenosylmethionine synthase.